Here is a 142-residue protein sequence, read N- to C-terminus: uncharacterized protein (142 aa).

It belongs to the GlcG family.

This is an uncharacterized protein from Citrobacter freundii.